The primary structure comprises 195 residues: Transmembrane protein 239 (195 aa).

2 helical membrane-spanning segments follow: residues 105–125 (LWGL…HALF) and 145–171 (HLLP…LLLF).

It is found in the membrane. The sequence is that of Transmembrane protein 239 (TMEM239) from Homo sapiens (Human).